Here is a 525-residue protein sequence, read N- to C-terminus: NAD(P)H-quinone oxidoreductase subunit 2 (525 aa).

A run of 14 helical transmembrane segments spans residues 14–34 (AIWP…VDLV), 42–62 (SLPA…VLQW), 78–98 (PVSI…VMMA), 117–137 (LTAT…MVFV), 167–187 (LLTG…LYGL), 201–221 (LANA…GIGF), 240–260 (PTPV…ALAI), 276–296 (AVLS…AIAQ), 302–322 (LLAY…VAGT), 330–350 (IFYL…VTLF), 374–394 (LCLS…GFFG), 396–416 (LYLF…VGLV), 462–482 (VGMV…NPLF), and 494–514 (FLGF…SLAV).

The protein belongs to the complex I subunit 2 family. NDH-1 can be composed of about 15 different subunits; different subcomplexes with different compositions have been identified which probably have different functions.

It localises to the cellular thylakoid membrane. The enzyme catalyses a plastoquinone + NADH + (n+1) H(+)(in) = a plastoquinol + NAD(+) + n H(+)(out). It catalyses the reaction a plastoquinone + NADPH + (n+1) H(+)(in) = a plastoquinol + NADP(+) + n H(+)(out). In terms of biological role, NDH-1 shuttles electrons from an unknown electron donor, via FMN and iron-sulfur (Fe-S) centers, to quinones in the respiratory and/or the photosynthetic chain. The immediate electron acceptor for the enzyme in this species is believed to be plastoquinone. Couples the redox reaction to proton translocation, and thus conserves the redox energy in a proton gradient. Cyanobacterial NDH-1 also plays a role in inorganic carbon-concentration. The sequence is that of NAD(P)H-quinone oxidoreductase subunit 2 from Synechococcus sp. (strain JA-3-3Ab) (Cyanobacteria bacterium Yellowstone A-Prime).